Reading from the N-terminus, the 317-residue chain is tRNA dimethylallyltransferase (317 aa).

Position 14–21 (glycine 14–threonine 21) interacts with ATP. Threonine 16–threonine 21 provides a ligand contact to substrate. Interaction with substrate tRNA regions lie at residues aspartate 39–leucine 42, glutamine 163–arginine 167, and arginine 248–arginine 253.

It belongs to the IPP transferase family. Monomer. Mg(2+) is required as a cofactor.

It catalyses the reaction adenosine(37) in tRNA + dimethylallyl diphosphate = N(6)-dimethylallyladenosine(37) in tRNA + diphosphate. Catalyzes the transfer of a dimethylallyl group onto the adenine at position 37 in tRNAs that read codons beginning with uridine, leading to the formation of N6-(dimethylallyl)adenosine (i(6)A). The sequence is that of tRNA dimethylallyltransferase from Paraburkholderia phymatum (strain DSM 17167 / CIP 108236 / LMG 21445 / STM815) (Burkholderia phymatum).